We begin with the raw amino-acid sequence, 348 residues long: Dihydroorotase (348 aa).

Zn(2+)-binding residues include His-17 and His-19. Substrate contacts are provided by residues 19–21 and Asn-45; that span reads HLR. Positions 103, 140, and 178 each coordinate Zn(2+). At Lys-103 the chain carries N6-carboxylysine. Residue His-140 participates in substrate binding. Residue Leu-223 participates in substrate binding. Residue Asp-251 participates in Zn(2+) binding. The active site involves Asp-251. Residues His-255 and Ala-267 each contribute to the substrate site.

The protein belongs to the metallo-dependent hydrolases superfamily. DHOase family. Class II DHOase subfamily. Homodimer. The cofactor is Zn(2+).

It catalyses the reaction (S)-dihydroorotate + H2O = N-carbamoyl-L-aspartate + H(+). It participates in pyrimidine metabolism; UMP biosynthesis via de novo pathway; (S)-dihydroorotate from bicarbonate: step 3/3. In terms of biological role, catalyzes the reversible cyclization of carbamoyl aspartate to dihydroorotate. In Salmonella paratyphi B (strain ATCC BAA-1250 / SPB7), this protein is Dihydroorotase.